Reading from the N-terminus, the 102-residue chain is MPIAVGMIETLGFPAVVEAADAMVKAARVTLVGYEKIGSGRVTVIVRGDVSEVQASVSAGLDSAKRVAGGEVLSHHIIARPHENLEYVLPIRYTEAVEQFRM.

In terms of domain architecture, BMC spans 4–90 (AVGMIETLGF…PHENLEYVLP (87 aa)).

The protein belongs to the bacterial microcompartments protein family. CcmK subfamily. As to quaternary structure, homohexamer. Interacts with CcmO in the carboxysome. Interacts with CcmN.

The protein localises to the carboxysome. Its function is as follows. One of the shell proteins of the carboxysome, a polyhedral inclusion where RuBisCO (ribulose bisphosphate carboxylase, rbcL-rbcS) is sequestered. Assembles into hexamers which make sheets that form the facets of the polyhedral carboxysome. The hexamer central pore probably regulates metabolite flux. Functionally, the major shell protein of the carboxysome, a polyhedral inclusion where RuBisCO (ribulose bisphosphate carboxylase, rbcL-rbcS) is sequestered. Hexamers make sheets that form the facets of the polyhedral carboxysome. The shell is 4.5 nm thick, as observed for CcmK hexamers. Required for recruitment of CcmO to the pre-carboxysome. In PCC 7942 there are several CcmK paralogs with presumably functional differences; replacing the central pore residues (34-37) with those of either CcmK4 from this organism (Tyr-Met-Arg-Ala) or from an alpha-type carboxysome forming cyanobacterium (CsoS1 of P.marinus strain MIT 9313, Arg-Glu-Phe-Val) allows the bacterium to make carboxysomes, but the expression level is too low to know if the carboxysome is functional for CO(2) fixation. In terms of biological role, beta-carboxysome assembly initiates when soluble RuBisCO is condensed into a liquid matrix in a pre-carboxysome by the RbcS-like domains of probably both CcmM58 and CcmM35. CcmN interacts with the N-terminus of CcmM58, and then recruits the CcmK2 major shell protein via CcmN's encapsulation peptide. Shell formation requires CcmK proteins and CcmO. CcmL caps the otherwise elongated carboxysome. Once fully encapsulated carboxysomes are formed, they migrate within the cell probably via interactions with the cytoskeleton. This chain is Carboxysome shell protein CcmK2, found in Synechococcus elongatus (strain ATCC 33912 / PCC 7942 / FACHB-805) (Anacystis nidulans R2).